The following is a 109-amino-acid chain: Putative double-stranded DNA mimic protein YciU (109 aa).

It belongs to the putative dsDNA mimic protein family.

May act as a double-stranded DNA (dsDNA) mimic. Probably regulates the activity of a dsDNA-binding protein. This chain is Putative double-stranded DNA mimic protein YciU, found in Shigella flexneri.